The sequence spans 225 residues: Uridylate kinase (225 aa).

9–10 (GS) is a binding site for ATP. Glycine 46 serves as a coordination point for UMP. Residues glycine 47 and arginine 51 each contribute to the ATP site. UMP-binding positions include aspartate 67 and 115 to 121 (THPAHTT). Residues threonine 141, asparagine 142, tyrosine 147, and aspartate 150 each coordinate ATP.

This sequence belongs to the UMP kinase family. Homohexamer.

The protein resides in the cytoplasm. It carries out the reaction UMP + ATP = UDP + ADP. It functions in the pathway pyrimidine metabolism; CTP biosynthesis via de novo pathway; UDP from UMP (UMPK route): step 1/1. Inhibited by UTP. In terms of biological role, catalyzes the reversible phosphorylation of UMP to UDP. In Methanococcus vannielii (strain ATCC 35089 / DSM 1224 / JCM 13029 / OCM 148 / SB), this protein is Uridylate kinase.